Reading from the N-terminus, the 367-residue chain is Glutamate 5-kinase (367 aa).

Lys-10 contributes to the ATP binding site. Residues Ser-50, Asp-137, and Asn-149 each contribute to the substrate site. Residues 169–170 (TD) and 211–217 (TGGMGTK) contribute to the ATP site. Residues 275-353 (AGEITVDDGA…QEISEILGYE (79 aa)) enclose the PUA domain.

It belongs to the glutamate 5-kinase family.

It is found in the cytoplasm. The catalysed reaction is L-glutamate + ATP = L-glutamyl 5-phosphate + ADP. It participates in amino-acid biosynthesis; L-proline biosynthesis; L-glutamate 5-semialdehyde from L-glutamate: step 1/2. Its activity is regulated as follows. Proline-mediated feedback inhibition. In terms of biological role, catalyzes the transfer of a phosphate group to glutamate to form L-glutamate 5-phosphate. The protein is Glutamate 5-kinase of Serratia marcescens.